A 148-amino-acid polypeptide reads, in one-letter code: Probable histone H2A.1 (148 aa).

Residues Met-1–Val-23 show a composition bias toward basic residues. Disordered stretches follow at residues Met-1–Arg-28 and Lys-127–Ala-148. The segment covering Ala-131–Thr-142 has biased composition (low complexity). Short sequence motifs (SPKK motif) lie at residues Ser-137–Lys-140 and Ser-144–Lys-147.

This sequence belongs to the histone H2A family. In terms of assembly, the nucleosome is a histone octamer containing two molecules each of H2A, H2B, H3 and H4 assembled in one H3-H4 heterotetramer and two H2A-H2B heterodimers. The octamer wraps approximately 147 bp of DNA.

The protein localises to the nucleus. Its subcellular location is the chromosome. Its function is as follows. Core component of nucleosome. Nucleosomes wrap and compact DNA into chromatin, limiting DNA accessibility to the cellular machineries which require DNA as a template. Histones thereby play a central role in transcription regulation, DNA repair, DNA replication and chromosomal stability. DNA accessibility is regulated via a complex set of post-translational modifications of histones, also called histone code, and nucleosome remodeling. The polypeptide is Probable histone H2A.1 (Medicago truncatula (Barrel medic)).